A 573-amino-acid polypeptide reads, in one-letter code: MSEDTQTATENKPDIKPRSRVVTDGIHAAPARGMFRAVGMGDDDFAKPQIGVASSWNEITPCNLSLNRLAQGAKEGVHAGGGFPMQFGTISVSDGISMGHEGMHFSLVSREVIADSVETVMQAERIDGSVLLAGCDKSLPGMLMAAARLDLASVFLYAGSIMPGWVKLEDGSEKEVTLIDAFEAVGACAAGKMSRGDLDRIERAICPGEGACGGMYTANTMACIGEALGMSLPGSAAPPSADRRRDEFARKSGEAVVNLLRLGITARDIMTKKAFENAIAVTMAFGGSTNAVLHLLAIAREAEVELTLDDFNRIGDKIPHLGDLKPFGRYVMTDVDKIGGVPVIMKALLDAGLLHGDCLTVTGKTLAENLASINPPDLDGKILRALDNPIHKTGGITILHGSMAPEGAVVKSAGFDADVFEGTARVFEREQGALDALDNGKINKGDVVVIRYEGPKGGPGMREMLAITGAIKGAGLGKDVLLLTDGRFSGGTTGLCIGHVAPEAVDGGPIAFVKDGDRIRVDIAARSFDLLVDEAELESRKVGWEPLPAKFTKGVLAKYAKLVHSASTGAYCG.

[2Fe-2S] cluster is bound at residue C62. D94 is a binding site for Mg(2+). C135 contacts [2Fe-2S] cluster. Positions 136 and 137 each coordinate Mg(2+). K137 bears the N6-carboxylysine mark. C212 lines the [2Fe-2S] cluster pocket. E463 lines the Mg(2+) pocket. The active-site Proton acceptor is the S489.

This sequence belongs to the IlvD/Edd family. In terms of assembly, homodimer. It depends on [2Fe-2S] cluster as a cofactor. The cofactor is Mg(2+).

It catalyses the reaction (2R)-2,3-dihydroxy-3-methylbutanoate = 3-methyl-2-oxobutanoate + H2O. The enzyme catalyses (2R,3R)-2,3-dihydroxy-3-methylpentanoate = (S)-3-methyl-2-oxopentanoate + H2O. It functions in the pathway amino-acid biosynthesis; L-isoleucine biosynthesis; L-isoleucine from 2-oxobutanoate: step 3/4. Its pathway is amino-acid biosynthesis; L-valine biosynthesis; L-valine from pyruvate: step 3/4. Functionally, functions in the biosynthesis of branched-chain amino acids. Catalyzes the dehydration of (2R,3R)-2,3-dihydroxy-3-methylpentanoate (2,3-dihydroxy-3-methylvalerate) into 2-oxo-3-methylpentanoate (2-oxo-3-methylvalerate) and of (2R)-2,3-dihydroxy-3-methylbutanoate (2,3-dihydroxyisovalerate) into 2-oxo-3-methylbutanoate (2-oxoisovalerate), the penultimate precursor to L-isoleucine and L-valine, respectively. The chain is Dihydroxy-acid dehydratase from Arthrobacter sp. (strain FB24).